The chain runs to 542 residues: Phosphoenolpyruvate carboxykinase (ATP) (542 aa).

Residues R67, Y208, and K214 each contribute to the substrate site. Residues K214, H233, and 249 to 257 (GLSGTGKTT) each bind ATP. Residues K214 and H233 each coordinate Mn(2+). D270 is a binding site for Mn(2+). Residues E298, R334, 450–451 (RI), and T456 contribute to the ATP site. A substrate-binding site is contributed by R334.

This sequence belongs to the phosphoenolpyruvate carboxykinase (ATP) family. In terms of assembly, monomer. It depends on Mn(2+) as a cofactor.

Its subcellular location is the cytoplasm. The catalysed reaction is oxaloacetate + ATP = phosphoenolpyruvate + ADP + CO2. It functions in the pathway carbohydrate biosynthesis; gluconeogenesis. Involved in the gluconeogenesis. Catalyzes the conversion of oxaloacetate (OAA) to phosphoenolpyruvate (PEP) through direct phosphoryl transfer between the nucleoside triphosphate and OAA. The protein is Phosphoenolpyruvate carboxykinase (ATP) of Vibrio vulnificus (strain YJ016).